A 468-amino-acid polypeptide reads, in one-letter code: ERO1-like protein alpha (468 aa).

Positions 1-23 are cleaved as a signal peptide; it reads MGRGWGFLFGLLGAVWLLSSGHG. 8 cysteine pairs are disulfide-bonded: Cys-35–Cys-48, Cys-37–Cys-46, Cys-85–Cys-391, Cys-94–Cys-99, Cys-94–Cys-131, Cys-99–Cys-104, Cys-208–Cys-241, and Cys-394–Cys-397. Phosphoserine is present on residues Ser-106 and Ser-143. Ser-145 is subject to Phosphoserine; by FAM20C. 3 residues coordinate FAD: Arg-187, Thr-189, and Trp-200. Residues Ser-252 and His-255 each coordinate FAD. Asn-280 carries an N-linked (GlcNAc...) asparagine glycan. Residues Arg-287 and Arg-300 each coordinate FAD. N-linked (GlcNAc...) asparagine glycosylation is present at Asn-384.

The protein belongs to the EROs family. As to quaternary structure, predominantly monomer. May function both as a monomer and a homodimer. Interacts with PDILT. Interacts with ERP44; the interaction results in retention of ERO1A in the endoplasmic reticulum. Requires FAD as cofactor. Post-translationally, N-glycosylated. The Cys-94/Cys-99 and Cys-394/Cys-397 disulfide bonds constitute the redox-active center. The Cys-94/Cys-99 disulfide bond may accept electron from P4HB and funnel them to the active site disulfide Cys-394/Cys-397. The regulatory Cys-99/Cys-104 disulfide bond stabilizes the other regulatory bond Cys-94/Cys-131. In terms of processing, phosphorylated on Ser-145 by FAM20C in the Golgi which increases its enzymatic activity. Phosphorylation is induced by lactation. It is also induced by hypoxia and reductive stress. In terms of tissue distribution, widely expressed at low level. Expressed at high level in upper digestive tract. Highly expressed in esophagus. Weakly expressed in stomach and duodenum.

The protein localises to the endoplasmic reticulum membrane. The protein resides in the golgi apparatus lumen. Its subcellular location is the secreted. It is found in the cell projection. It localises to the dendrite. Its activity is regulated as follows. Enzyme activity is tightly regulated to prevent the accumulation of reactive oxygen species in the endoplasmic reticulum. Reversibly down-regulated by the formation of disulfide bonds between the active site Cys-94 and Cys-131, and between Cys-99 and Cys-104. Glutathione may be required to regulate its activity in the endoplasmic reticulum. Oxidoreductase involved in disulfide bond formation in the endoplasmic reticulum. Efficiently reoxidizes P4HB/PDI, the enzyme catalyzing protein disulfide formation, in order to allow P4HB to sustain additional rounds of disulfide formation. Following P4HB reoxidation, passes its electrons to molecular oxygen via FAD, leading to the production of reactive oxygen species (ROS) in the cell. Required for the proper folding of immunoglobulins. Plays an important role in ER stress-induced, CHOP-dependent apoptosis by activating the inositol 1,4,5-trisphosphate receptor IP3R1. Involved in the release of the unfolded cholera toxin from reduced P4HB/PDI in case of infection by V.cholerae, thereby playing a role in retrotranslocation of the toxin. This chain is ERO1-like protein alpha, found in Homo sapiens (Human).